The primary structure comprises 92 residues: Protein S100-A6 (92 aa).

EF-hand domains are found at residues 12–47 (LVAI…IGAE) and 48–83 (LEDS…LAMI). Ca(2+) contacts are provided by threonine 28 and glutamate 33. The residue at position 40 (lysine 40) is an N6-acetyllysine. Residues aspartate 61, asparagine 63, aspartate 65, and glutamate 72 each coordinate Ca(2+).

It belongs to the S-100 family. In terms of assembly, homodimer; head to tail assembly of 2 subunits. Interacts with CACYBP in a calcium-dependent manner. Interacts with ANXA2 and ANXA11 (via N-terminus). Interacts with SUGT1. Interacts with TP53; has higher affinity for TP53 that is phosphorylated on its N-terminal domain, and lower affinity for TP53 that is phosphorylated on its C-terminal domain. Interacts with tropomyosin. Interacts with FKBP4. Interacts with PPP5C (via TPR repeats); the interaction is calcium-dependent and modulates PPP5C activity. Interacts with TPPP; this interaction inhibits TPPP dimerization.

Its subcellular location is the nucleus envelope. The protein localises to the cytoplasm. The protein resides in the cell membrane. Its function is as follows. May function as calcium sensor and modulator, contributing to cellular calcium signaling. May function by interacting with other proteins, such as TPR-containing proteins, and indirectly play a role in many physiological processes such as the reorganization of the actin cytoskeleton and in cell motility. Binds 2 calcium ions. Calcium binding is cooperative. The chain is Protein S100-A6 (S100A6) from Equus caballus (Horse).